We begin with the raw amino-acid sequence, 386 residues long: MGKAIHFGGGNIGRGFVGEFLHEAGYEVVFVDVVDDLITSIQNTPSYEITEISEDGEKTKKITNYRALNSKSHEADVVQEIATADIVTCAVGPRVLQFIAPVIAKGLESRNVSTPLTVIACENAINATDTLRGHIEKKTKPEIISERAVFANCAIDRIVPNQPPNNGLNVRIEKYWEWVVEQTPFKEKGVAHPNVSAIHWVDKLDPYIERKLFTVNTGHATTAYYGHLAGKKTIADALHDPKIRENVHKVLDETASLIINKHGISEQEQKEYVDKIISRISNPYLEDGVERVGRAPLRKLSRNERFIGPASQLAERGLKFDALLGAIEQALRFQNVEGDEESKELAKILKEKTAEEATSELTELEKDHPLYSHVLERVRTVQQESK.

4 to 15 (AIHFGGGNIGRG) provides a ligand contact to NAD(+). Residue Lys-211 is part of the active site.

Belongs to the mannitol dehydrogenase family. In terms of assembly, monomer.

The enzyme catalyses D-mannitol 1-phosphate + NAD(+) = beta-D-fructose 6-phosphate + NADH + H(+). Functionally, catalyzes the NAD(H)-dependent interconversion of D-fructose 6-phosphate and D-mannitol 1-phosphate in the mannitol metabolic pathway. In Emericella nidulans (strain FGSC A4 / ATCC 38163 / CBS 112.46 / NRRL 194 / M139) (Aspergillus nidulans), this protein is Mannitol-1-phosphate 5-dehydrogenase (mpdA).